The primary structure comprises 65 residues: Small ribosomal subunit protein eS31 (65 aa).

Zn(2+)-binding residues include Cys-36, Cys-39, Cys-55, and Cys-58. The segment at 36–58 (CPKCGSVMAFHKEPVPRWHCGKC) adopts a C4-type zinc-finger fold.

It belongs to the eukaryotic ribosomal protein eS31 family. As to quaternary structure, part of the 30S ribosomal subunit. It depends on Zn(2+) as a cofactor.

In Pyrobaculum aerophilum (strain ATCC 51768 / DSM 7523 / JCM 9630 / CIP 104966 / NBRC 100827 / IM2), this protein is Small ribosomal subunit protein eS31.